A 179-amino-acid chain; its full sequence is MKFSIIALALAVAFVCVAESRSEEEGYDVSEEIQAEELEEAARGGINRKLMEMVNKLRKVQGREDSEDAGRAGINRKLMEMVNKLRKVQGREDTEEAGRGGINRKLMEMVNKLRKVQGREDSEEAGRGGINRKLMEMVNKLRKVQGREDTEEARSLKDKVKSMGEKLKQYIQTWKAKFG.

An N-terminal signal peptide occupies residues methionine 1–serine 22. Residues glutamate 23–arginine 43 constitute a propeptide that is removed on maturation. Residues glutamate 40–arginine 43 carry the Processing quadruplet motif 1 motif. Glutamine 61 carries the post-translational modification Glutamine amide. The short motif at arginine 63 to serine 66 is the Inverted processing quadruplet motif 1 element. Residues arginine 63–arginine 71 constitute a propeptide that is removed on maturation. Residues aspartate 68–arginine 71 carry the Processing quadruplet motif 2 motif. At glutamine 89 the chain carries Glutamine amide. The short motif at arginine 91–threonine 94 is the Inverted processing quadruplet motif 2 element. The propeptide occupies arginine 91–arginine 99. A Processing quadruplet motif 3 motif is present at residues glutamate 96–arginine 99. Position 117 is a glutamine amide (glutamine 117). The Inverted processing quadruplet motif 3 motif lies at arginine 119 to serine 122. The propeptide occupies arginine 119–arginine 127. The short motif at glutamate 124 to arginine 127 is the Processing quadruplet motif 4 element. Glutamine 145 is modified (glutamine amide). An Inverted processing quadruplet motif 4 motif is present at residues arginine 147–threonine 150. Residues arginine 147–arginine 154 constitute a propeptide that is removed on maturation. Residues glutamate 151–arginine 154 carry the Processing quadruplet motif 5 motif. Phenylalanine 178 is modified (phenylalanine amide).

This sequence belongs to the cationic peptide 03 (latarcin) family. 04 subfamily. In terms of processing, cleavage of the propeptide depends on the processing quadruplet motif (PQM) (XXXR, with at least one of X being E) and the inverted PQM (RXXX, with at least one of X being E). As to expression, expressed by the venom gland.

It is found in the secreted. M-zodatoxin-Lt4b: Has antimicrobial activity against Gram-positive bacteria (A.globiformis VKM Ac-1112 (MIC=0.3 uM), and B.subtilis VKM B-501 (MIC=1.1 uM)), Gram-negative bacteria (E.coli DH5-alpha (MIC=4.4 uM), E.coli MH1 (MIC=4.4 uM), and P.aeruginosa PAO1 (MIC=&gt;35 uM)), and yeasts (P.pastoris GS115 (MIC=&gt;35 uM), and S.cerevisiae Y190 (MIC=35 uM)). Does not have hemolytic activity against rabbit erythrocytes. Causes paralysis, but is not lethal when injected into insect (M.domestica) larvae. Its function is as follows. Shows no antimicrobial activity against Gram-positive bacterium B.subtilis B-501 or Gram-negative bacterium E.coli DH5-alpha at concentration up to 20 uM. This chain is M-zodatoxin-Lt4b, found in Lachesana tarabaevi (Spider).